The sequence spans 190 residues: Probable nicotinate-nucleotide adenylyltransferase (190 aa).

It belongs to the NadD family.

The enzyme catalyses nicotinate beta-D-ribonucleotide + ATP + H(+) = deamido-NAD(+) + diphosphate. The protein operates within cofactor biosynthesis; NAD(+) biosynthesis; deamido-NAD(+) from nicotinate D-ribonucleotide: step 1/1. Catalyzes the reversible adenylation of nicotinate mononucleotide (NaMN) to nicotinic acid adenine dinucleotide (NaAD). The protein is Probable nicotinate-nucleotide adenylyltransferase of Borrelia hermsii (strain HS1 / DAH).